A 461-amino-acid polypeptide reads, in one-letter code: 3-isopropylmalate dehydratase large subunit (461 aa).

[4Fe-4S] cluster contacts are provided by Cys338, Cys398, and Cys401.

Belongs to the aconitase/IPM isomerase family. LeuC type 1 subfamily. Heterodimer of LeuC and LeuD. Requires [4Fe-4S] cluster as cofactor.

It carries out the reaction (2R,3S)-3-isopropylmalate = (2S)-2-isopropylmalate. Its pathway is amino-acid biosynthesis; L-leucine biosynthesis; L-leucine from 3-methyl-2-oxobutanoate: step 2/4. Catalyzes the isomerization between 2-isopropylmalate and 3-isopropylmalate, via the formation of 2-isopropylmaleate. This Streptococcus mutans serotype c (strain ATCC 700610 / UA159) protein is 3-isopropylmalate dehydratase large subunit.